We begin with the raw amino-acid sequence, 299 residues long: tRNA dimethylallyltransferase (299 aa).

11 to 18 is a binding site for ATP; sequence GPTAVGKT. 13 to 18 contributes to the substrate binding site; the sequence is TAVGKT. The segment at 36–39 is interaction with substrate tRNA; that stretch reads DSQQ.

It belongs to the IPP transferase family. Monomer. It depends on Mg(2+) as a cofactor.

It carries out the reaction adenosine(37) in tRNA + dimethylallyl diphosphate = N(6)-dimethylallyladenosine(37) in tRNA + diphosphate. Functionally, catalyzes the transfer of a dimethylallyl group onto the adenine at position 37 in tRNAs that read codons beginning with uridine, leading to the formation of N6-(dimethylallyl)adenosine (i(6)A). This Streptococcus pyogenes serotype M28 (strain MGAS6180) protein is tRNA dimethylallyltransferase.